A 361-amino-acid polypeptide reads, in one-letter code: Holliday junction branch migration complex subunit RuvB (361 aa).

The segment at 1 to 25 (MSIHTDDFGQGGFAQGGFPPDKAPD) is disordered. Positions 5–207 (TDDFGQGGFA…FGIVARLEFY (203 aa)) are large ATPase domain (RuvB-L). Residues Leu46, Arg47, Gly88, Lys91, Thr92, Thr93, 154 to 156 (EDY), Arg197, Tyr207, and Arg244 each bind ATP. Position 92 (Thr92) interacts with Mg(2+). Residues 208–278 (TAEELARIVR…LADRALAMLD (71 aa)) are small ATPAse domain (RuvB-S). The interval 281–361 (PQGFDIMDRK…GLPVPGDDAS (81 aa)) is head domain (RuvB-H). Residues Arg336 and Arg341 each contribute to the DNA site.

It belongs to the RuvB family. Homohexamer. Forms an RuvA(8)-RuvB(12)-Holliday junction (HJ) complex. HJ DNA is sandwiched between 2 RuvA tetramers; dsDNA enters through RuvA and exits via RuvB. An RuvB hexamer assembles on each DNA strand where it exits the tetramer. Each RuvB hexamer is contacted by two RuvA subunits (via domain III) on 2 adjacent RuvB subunits; this complex drives branch migration. In the full resolvosome a probable DNA-RuvA(4)-RuvB(12)-RuvC(2) complex forms which resolves the HJ.

The protein resides in the cytoplasm. It catalyses the reaction ATP + H2O = ADP + phosphate + H(+). Its function is as follows. The RuvA-RuvB-RuvC complex processes Holliday junction (HJ) DNA during genetic recombination and DNA repair, while the RuvA-RuvB complex plays an important role in the rescue of blocked DNA replication forks via replication fork reversal (RFR). RuvA specifically binds to HJ cruciform DNA, conferring on it an open structure. The RuvB hexamer acts as an ATP-dependent pump, pulling dsDNA into and through the RuvAB complex. RuvB forms 2 homohexamers on either side of HJ DNA bound by 1 or 2 RuvA tetramers; 4 subunits per hexamer contact DNA at a time. Coordinated motions by a converter formed by DNA-disengaged RuvB subunits stimulates ATP hydrolysis and nucleotide exchange. Immobilization of the converter enables RuvB to convert the ATP-contained energy into a lever motion, pulling 2 nucleotides of DNA out of the RuvA tetramer per ATP hydrolyzed, thus driving DNA branch migration. The RuvB motors rotate together with the DNA substrate, which together with the progressing nucleotide cycle form the mechanistic basis for DNA recombination by continuous HJ branch migration. Branch migration allows RuvC to scan DNA until it finds its consensus sequence, where it cleaves and resolves cruciform DNA. The chain is Holliday junction branch migration complex subunit RuvB from Delftia acidovorans (strain DSM 14801 / SPH-1).